A 206-amino-acid polypeptide reads, in one-letter code: Imidazole glycerol phosphate synthase subunit HisH (206 aa).

The region spanning Ser5–Leu206 is the Glutamine amidotransferase type-1 domain. The active-site Nucleophile is the Cys83. Residues His187 and Glu189 contribute to the active site.

Heterodimer of HisH and HisF.

The protein localises to the cytoplasm. It catalyses the reaction 5-[(5-phospho-1-deoxy-D-ribulos-1-ylimino)methylamino]-1-(5-phospho-beta-D-ribosyl)imidazole-4-carboxamide + L-glutamine = D-erythro-1-(imidazol-4-yl)glycerol 3-phosphate + 5-amino-1-(5-phospho-beta-D-ribosyl)imidazole-4-carboxamide + L-glutamate + H(+). The catalysed reaction is L-glutamine + H2O = L-glutamate + NH4(+). It functions in the pathway amino-acid biosynthesis; L-histidine biosynthesis; L-histidine from 5-phospho-alpha-D-ribose 1-diphosphate: step 5/9. Functionally, IGPS catalyzes the conversion of PRFAR and glutamine to IGP, AICAR and glutamate. The HisH subunit catalyzes the hydrolysis of glutamine to glutamate and ammonia as part of the synthesis of IGP and AICAR. The resulting ammonia molecule is channeled to the active site of HisF. The chain is Imidazole glycerol phosphate synthase subunit HisH from Mycolicibacterium paratuberculosis (strain ATCC BAA-968 / K-10) (Mycobacterium paratuberculosis).